A 181-amino-acid chain; its full sequence is Large ribosomal subunit protein uL10 (181 aa).

The protein belongs to the universal ribosomal protein uL10 family. As to quaternary structure, part of the ribosomal stalk of the 50S ribosomal subunit. The N-terminus interacts with L11 and the large rRNA to form the base of the stalk. The C-terminus forms an elongated spine to which L12 dimers bind in a sequential fashion forming a multimeric L10(L12)X complex.

Functionally, forms part of the ribosomal stalk, playing a central role in the interaction of the ribosome with GTP-bound translation factors. This chain is Large ribosomal subunit protein uL10, found in Protochlamydia amoebophila (strain UWE25).